Reading from the N-terminus, the 198-residue chain is MADARKNNVTIKVGMIGDSSIGKTSLMVTYVQGSFDEESTQTLGVNFMEKTISIRNTEITFSIWDLGGQREFVNMLPMVCNDAVAILFMFDLSRKSTLNSIKEWYRQARGFNKTAVPILIGTKYDHFMTFPREDQEEITKQARRYAKAMKASLVFCSTSHSINVQKIFKIVLAKVFDLKCTIPEIKNVGDPILEYIDR.

The tract at residues 6–198 (KNNVTIKVGM…GDPILEYIDR (193 aa)) is small GTPase-like. Residues 17-24 (GDSSIGKT), 65-69 (DLGGQ), and 122-125 (TKYD) contribute to the GTP site.

Interacts with cdc7 and cdc11.

Functionally, GTP-binding protein essential for the induction of septum formation at G2 and pre-START stages of mitosis. Acts via the cdc7 protein kinase pathway. The protein is Septum-promoting GTP-binding protein 1 (spg1) of Schizosaccharomyces pombe (strain 972 / ATCC 24843) (Fission yeast).